We begin with the raw amino-acid sequence, 214 residues long: Cytochrome b (214 aa).

The next 4 helical transmembrane spans lie at F31–F51, W75–I96, W111–L131, and F176–L196. Heme b is bound by residues H81 and H95. 2 residues coordinate heme b: H180 and H194. H199 is an a ubiquinone binding site.

This sequence belongs to the cytochrome b family. In terms of assembly, the cytochrome bc1 complex contains 3 respiratory subunits (MT-CYB, CYC1 and UQCRFS1), 2 core proteins (UQCRC1 and UQCRC2) and probably 6 low-molecular weight proteins. Requires heme b as cofactor.

It localises to the mitochondrion inner membrane. In terms of biological role, component of the ubiquinol-cytochrome c reductase complex (complex III or cytochrome b-c1 complex) that is part of the mitochondrial respiratory chain. The b-c1 complex mediates electron transfer from ubiquinol to cytochrome c. Contributes to the generation of a proton gradient across the mitochondrial membrane that is then used for ATP synthesis. This is Cytochrome b (MT-CYB) from Gloydius blomhoffii (Mamushi).